Reading from the N-terminus, the 174-residue chain is Transcriptional repressor NrdR (174 aa).

Residues 3 to 34 (CPICHFPETDVIDTRKLYEGEVIRRRRKCRAC) fold into a zinc finger. In terms of domain architecture, ATP-cone spans 49-139 (LMVVKKDGTR…VYRSFADIGK (91 aa)). The disordered stretch occupies residues 151–174 (EGTRNGHSSAATTDQGTTDNHSRM). Residues 155-174 (NGHSSAATTDQGTTDNHSRM) show a composition bias toward polar residues.

It belongs to the NrdR family. Requires Zn(2+) as cofactor.

In terms of biological role, negatively regulates transcription of bacterial ribonucleotide reductase nrd genes and operons by binding to NrdR-boxes. This Chloroflexus aggregans (strain MD-66 / DSM 9485) protein is Transcriptional repressor NrdR.